The chain runs to 600 residues: Beta-hexosaminidase (600 aa).

The N-terminal stretch at 1 to 18 (MRISQICTVLSTVTSAVA) is a signal peptide. A propeptide spanning residues 19-96 (VGVNPLPAPR…PFPTPTAGAS (78 aa)) is cleaved from the precursor. O-linked (Man...) threonine glycosylation occurs at Thr78. Ser83 and Ser84 each carry an O-linked (Man...) serine glycan. Catalysis depends on charge relay system residues Asp222 and His275. Residues Cys290 and Cys351 are joined by a disulfide bond. Residue Asn318 is glycosylated (N-linked (HexNAc...) asparagine). Glu346 serves as the catalytic Charge relay system. Asn353 carries an N-linked (GlcNAc...) asparagine glycan. An N-linked (HexNAc...) asparagine glycan is attached at Asn387. The N-linked (GlcNAc...) asparagine glycan is linked to Asn428. Cys448 and Cys483 are oxidised to a cystine. Asn500 and Asn525 each carry an N-linked (GlcNAc...) asparagine glycan. The cysteines at positions 583 and 590 are disulfide-linked.

Belongs to the glycosyl hydrolase 20 family. In terms of assembly, homodimer. Oligosaccharide moieties may also take part in the dimerization. Dimerization is a pH-dependent reversible process. The individual catalytic cores dimerize and the catalytic core of one subunit in the active dimer interacts with the propeptide of the second subunit. In terms of processing, the precursor of the propeptide is intracellularly processed in the endoplasmic reticulum by a dibasic peptidase, different from Kex2, removing Lys-97--Arg-101 from the precursor producing the activated propeptide. The propeptide binds non-covalently to the catalytic domain. Propeptide binding is necessary for full activation of the enzyme, dimerization of the catalytic domain and secretion of the active enzyme. O-glycosylated. O-glycosylation (O-mannosylation) at the C-terminus of the propeptide is necessary for full enzyme activity. N-glycosylated. N-glycosylation of the catalytic domain increases the stability and solubility of the enzyme, especially at low pH. Contains high mannose-type (M4-M11) N-glycans at the C-terminus. N-glycan deglycosylation does not affect enzyme activity.

Its subcellular location is the secreted. The catalysed reaction is Hydrolysis of terminal non-reducing N-acetyl-D-hexosamine residues in N-acetyl-beta-D-hexosaminides.. With respect to regulation, activated by non-covalent binding of the propeptide to the catalytic domain. The concentration of the propeptide is regulated in the endoplasmic reticulum and the propeptide thus regulates the amount of the active enzyme at various stages of the growth cycle. The dimeric enzyme has about half of the maximal activity in the presence of one bound propeptide, but is fully active with two bound O-glycosylated propeptides. Inhibited by N-acetylglucosamine (NAG)-thiazoline. Its function is as follows. Selectively hydrolyzes GlcNAcbeta(1-&gt;4)GlcNAc (N,N'-diacetylchitobiose) and Gal-NAcbeta(1-&gt;4)GlcNAc, but not their C-2 epimers GlcNAcbeta(1-&gt;4)ManNAc or Gal-NAcbeta(1-&gt;4)ManNAc. However, hydrolyzes both GlcNAcbeta(1-&gt;6)GlcNAc and GlcNAcbeta(1-&gt;6)ManNAc. Part of the binary chitinolytic system. Involved in hydrolysis of chitobiose and higher chito-oligomers (produced from cell wall chitin by endochitinases), thus contributing to the formation of germ tubes, fruit-bodies and septa during hyphenation. Hydrolyzes synthetic substrate p-nitrophenyl-beta-N-acetyl-D-glucosaminide (pNP-GlcNAc). Hydrolyzes synthetic substrate p-nitrophenyl-beta-N-acetyl-D-galactosaminide (pNP-GalNAc). Hydrolyzes chromogenic substrate 4-nitrophenyl-2-acetamido-2-deoxyglucopyranoside. The polypeptide is Beta-hexosaminidase (Aspergillus oryzae (Yellow koji mold)).